We begin with the raw amino-acid sequence, 148 residues long: Lipoprotein MlpA (148 aa).

A signal peptide spans 1 to 17; the sequence is MKIINILFCLFLLLLNS. Cys-18 is lipidated: N-palmitoyl cysteine. Cys-18 carries S-diacylglycerol cysteine lipidation. A disordered region spans residues 26–58; that stretch reads LKNNAQQTKSRGKRDLTQKEATPEKPKSKEELL. Positions 38–58 are enriched in basic and acidic residues; that stretch reads KRDLTQKEATPEKPKSKEELL.

Belongs to the Multicopy lipoprotein (Mlp) family.

It is found in the cell outer membrane. Its function is as follows. An outer membrane protein that may participate in pathogenesis. Some human Lyme disease patients have antibodies against this protein. The Mlp proteins probably undergo intragenic recombination, generating new alleles. This chain is Lipoprotein MlpA (mlpA), found in Borreliella burgdorferi (strain ATCC 35210 / DSM 4680 / CIP 102532 / B31) (Borrelia burgdorferi).